The following is a 265-amino-acid chain: Thymidylate synthase (265 aa).

Arg21 is a dUMP binding site. (6R)-5,10-methylene-5,6,7,8-tetrahydrofolate is bound at residue His51. 127-128 (RR) lines the dUMP pocket. Catalysis depends on Cys147, which acts as the Nucleophile. DUMP contacts are provided by residues 167–170 (RSAD), Asn178, and 208–210 (HLY). Asp170 contacts (6R)-5,10-methylene-5,6,7,8-tetrahydrofolate. Ser264 is a binding site for (6R)-5,10-methylene-5,6,7,8-tetrahydrofolate.

Belongs to the thymidylate synthase family. Bacterial-type ThyA subfamily. Homodimer.

It localises to the cytoplasm. It carries out the reaction dUMP + (6R)-5,10-methylene-5,6,7,8-tetrahydrofolate = 7,8-dihydrofolate + dTMP. The protein operates within pyrimidine metabolism; dTTP biosynthesis. Functionally, catalyzes the reductive methylation of 2'-deoxyuridine-5'-monophosphate (dUMP) to 2'-deoxythymidine-5'-monophosphate (dTMP) while utilizing 5,10-methylenetetrahydrofolate (mTHF) as the methyl donor and reductant in the reaction, yielding dihydrofolate (DHF) as a by-product. This enzymatic reaction provides an intracellular de novo source of dTMP, an essential precursor for DNA biosynthesis. The polypeptide is Thymidylate synthase (Neisseria gonorrhoeae).